A 151-amino-acid chain; its full sequence is Large ribosomal subunit protein uL22 (151 aa).

Belongs to the universal ribosomal protein uL22 family. Part of the 50S ribosomal subunit.

Its function is as follows. This protein binds specifically to 23S rRNA. It makes multiple contacts with different domains of the 23S rRNA in the assembled 50S subunit and ribosome. In terms of biological role, the globular domain of the protein is located near the polypeptide exit tunnel on the outside of the subunit, while an extended beta-hairpin is found that lines the wall of the exit tunnel in the center of the 70S ribosome. The chain is Large ribosomal subunit protein uL22 from Thermofilum pendens (strain DSM 2475 / Hrk 5).